A 366-amino-acid polypeptide reads, in one-letter code: DNA primase large subunit PriL (366 aa).

[4Fe-4S] cluster contacts are provided by Cys-227, Cys-298, Cys-307, and Cys-314.

Belongs to the eukaryotic-type primase large subunit family. As to quaternary structure, heterodimer of a small subunit (PriS) and a large subunit (PriL). [4Fe-4S] cluster is required as a cofactor.

Its function is as follows. Regulatory subunit of DNA primase, an RNA polymerase that catalyzes the synthesis of short RNA molecules used as primers for DNA polymerase during DNA replication. Stabilizes and modulates the activity of the small subunit, increasing the rate of DNA synthesis, and conferring RNA synthesis capability. The DNA polymerase activity may enable DNA primase to also catalyze primer extension after primer synthesis. May also play a role in DNA repair. This is DNA primase large subunit PriL from Methanocella arvoryzae (strain DSM 22066 / NBRC 105507 / MRE50).